The primary structure comprises 363 residues: Insulin gene enhancer protein ISL-3 (363 aa).

LIM zinc-binding domains lie at 27 to 80 (CVGC…CKRD) and 89 to 143 (CAKC…RADH). Residues 191–250 (TTRVRTVLNEKQLHTLRTCYNANPRPDALMREQLVEMTGLSPRVIRVWFQNKRCKDKKRS) constitute a DNA-binding region (homeobox). Residues 328–363 (FSESGSLGNSSGSDVTSLSSHLPDTPNSMVPSPVET) are disordered. Over residues 329 to 340 (SESGSLGNSSGS) the composition is skewed to low complexity. The span at 341–363 (DVTSLSSHLPDTPNSMVPSPVET) shows a compositional bias: polar residues.

It is found in the nucleus. Binds to one of the cis-acting domain of the insulin gene enhancer. May be involved in subtype specialization of primary motoneurons. This chain is Insulin gene enhancer protein ISL-3 (isl3), found in Oncorhynchus tshawytscha (Chinook salmon).